Reading from the N-terminus, the 852-residue chain is Protein SEY1 (852 aa).

The Cytoplasmic segment spans residues 1 to 738 (MNGHFAAIGN…KRSAIGGITQ (738 aa)). One can recognise a GB1/RHD3-type G domain in the interval 47 to 294 (GFNYHLISVF…IPADGLSVYA (248 aa)). 57-64 (GSQSTGKS) lines the GTP pocket. Residues 475–500 (QYKLFEKELDEVSARLRKEEMRRLAI) adopt a coiled-coil conformation. The chain crosses the membrane as a helical span at residues 739–759 (VPLYFYVILLILGWNEILMVL). The Lumenal portion of the chain corresponds to 760–762 (RNP). A helical transmembrane segment spans residues 763-783 (FLILLILVMGGGTYIAYSLNL). The Cytoplasmic portion of the chain corresponds to 784–852 (LGPMMQMSNA…AQDISDDDDI (69 aa)).

The protein belongs to the TRAFAC class dynamin-like GTPase superfamily. GB1/RHD3 GTPase family. RHD3 subfamily.

Its subcellular location is the endoplasmic reticulum membrane. Cooperates with the reticulon proteins and tubule-shaping DP1 family proteins to generate and maintain the structure of the tubular endoplasmic reticulum network. Has GTPase activity, which is required for its function in ER organization. The sequence is that of Protein SEY1 from Podospora anserina (strain S / ATCC MYA-4624 / DSM 980 / FGSC 10383) (Pleurage anserina).